The primary structure comprises 180 residues: ADP-ribosylation factor-like protein 1 (180 aa).

Glycine 2 is lipidated: N-myristoyl glycine. GTP contacts are provided by residues 23 to 30, 66 to 70, and 125 to 128; these read GLDGAGKT, DLGGQ, and NKQD.

This sequence belongs to the small GTPase superfamily. Arf family. Expressed in neuronal cells. Expression in hypodermal tissues is absent.

The protein resides in the golgi apparatus. Its subcellular location is the cytoplasm. The protein localises to the cytoplasmic granule. In terms of biological role, GTP-binding protein that may be involved in protein trafficking; may modulate vesicle budding and uncoating within the Golgi apparatus. Plays a role in male tail tip morphogenesis. The sequence is that of ADP-ribosylation factor-like protein 1 from Caenorhabditis elegans.